The primary structure comprises 117 residues: Biogenesis of lysosome-related organelles complex 1 subunit BLS1 (117 aa).

A disordered region spans residues Glu-97–Asp-117.

This sequence belongs to the BLOC1S1 family. As to quaternary structure, component of the biogenesis of lysosome-related organelles complex-1 (BLOC-1).

Its subcellular location is the endosome. Functionally, component of the biogenesis of lysosome-related organelles complex-1 (BLOC-1), a complex involved in endosomal cargo sorting. This Eremothecium gossypii (strain ATCC 10895 / CBS 109.51 / FGSC 9923 / NRRL Y-1056) (Yeast) protein is Biogenesis of lysosome-related organelles complex 1 subunit BLS1 (BLS1).